Consider the following 337-residue polypeptide: ADP-ribosylation factor GTPase-activating protein AGD12 (337 aa).

The Arf-GAP domain occupies 15–137 (KRRIRDLLTQ…EFLKPSLRIT (123 aa)). Residues 30 to 53 (CADCGAPDPKWASANIGVFICLKC) form a C4-type zinc finger. In terms of domain architecture, C2 spans 164–281 (TNSSSQQPQL…AMAFGDPEMF (118 aa)). Residues Asp250, Ser253, and Asp256 each contribute to the Ca(2+) site.

Requires Ca(2+) as cofactor. As to expression, expressed in roots, leaves, flowers and siliques. Low levels of expression in seeds and stems.

It is found in the golgi apparatus. It localises to the cell membrane. In terms of biological role, GTPase-activating protein (GAP) for ADP ribosylation factor (ARF). Binds phosphatidylinositol 3-monophosohate (PI-3-P) and anionic phospholipids. The polypeptide is ADP-ribosylation factor GTPase-activating protein AGD12 (AGD12) (Arabidopsis thaliana (Mouse-ear cress)).